The sequence spans 632 residues: MHSDAPTPVANELSEVSHLAEGDNASFSAGNFTVLQLPSDPSHCIDYAIPAGTLVIVDPNNPDNNRTVKLQAPAVFRPQCALGGTRAPAPRPEESFPDWSEYQKYHHNDRRDPFYGSVTPIAYTIAASTVTAWMLLIILFLSRKPSPLFQKIAVLITAVSLTVFLAQATDTLESQYNEGYQNAYELRHKIMGGWAFRILQVITCVITWLARLQVVIRLFDVPKINTRLAVVGSTLIFTNATIWACLNLIPPWSQYVRNAKSVLPVFGALCSLLLEVFYLVVVVIYSISKRKYAYSRTSIVMAAISWLAMILPMVFIVFDIAHYWIAGWSDFIRWTADAAASVVVWEWTNVIVYQERREQRQSVLGRQVYRDEILDFKGDNGGGTVGGGRTKYPSRMEEDDVPFRSSPNDHHFTSNIPTSAGEGQSFQFFKRARLPMYSRKIWKIARGESAASNNTHYEHAIIEEEEEESIERNRRTPTVQENGEEDDEETYDEENDQYSQDNHSSVHSFESSRPSQHPVPSSGGTRAVGHTHFPLPGQSEGAHTTSPAAAAAAAEPEPEPVAGPSGGAAAHGDSDDDSDNSDDSSLASFTVIQQTGFSVDNQGVPEYDADSAPPTFEPIPGFHRQDYSDAKG.

The Extracellular segment spans residues 1–120 (MHSDAPTPVA…RDPFYGSVTP (120 aa)). Residues 121-141 (IAYTIAASTVTAWMLLIILFL) traverse the membrane as a helical segment. Over 142-145 (SRKP) the chain is Cytoplasmic. Residues 146-166 (SPLFQKIAVLITAVSLTVFLA) traverse the membrane as a helical segment. Residues 167 to 189 (QATDTLESQYNEGYQNAYELRHK) are Extracellular-facing. The helical transmembrane segment at 190-210 (IMGGWAFRILQVITCVITWLA) threads the bilayer. At 211–228 (RLQVVIRLFDVPKINTRL) the chain is on the cytoplasmic side. The chain crosses the membrane as a helical span at residues 229–249 (AVVGSTLIFTNATIWACLNLI). Residues 250-264 (PPWSQYVRNAKSVLP) are Extracellular-facing. The chain crosses the membrane as a helical span at residues 265-285 (VFGALCSLLLEVFYLVVVVIY). Residues 286–297 (SISKRKYAYSRT) lie on the Cytoplasmic side of the membrane. The chain crosses the membrane as a helical span at residues 298–318 (SIVMAAISWLAMILPMVFIVF). The Extracellular portion of the chain corresponds to 319-330 (DIAHYWIAGWSD). The helical transmembrane segment at 331-352 (FIRWTADAAASVVVWEWTNVIV) threads the bilayer. At 353-632 (YQERREQRQS…HRQDYSDAKG (280 aa)) the chain is on the cytoplasmic side. Gly residues predominate over residues 380–389 (NGGGTVGGGR). Disordered stretches follow at residues 380–419 (NGGG…IPTS) and 462–632 (IEEE…DAKG). The span at 482–496 (NGEEDDEETYDEEND) shows a compositional bias: acidic residues. A compositionally biased stretch (polar residues) spans 497–524 (QYSQDNHSSVHSFESSRPSQHPVPSSGG). The segment covering 546–571 (SPAAAAAAAEPEPEPVAGPSGGAAAH) has biased composition (low complexity). Positions 590 to 601 (TVIQQTGFSVDN) are enriched in polar residues. Basic and acidic residues predominate over residues 623–632 (HRQDYSDAKG).

This sequence belongs to the palH/RIM21 family.

The protein resides in the cell membrane. Its function is as follows. Required for the proteolytic cleavage of the transcription factor RIM101 in response to alkaline ambient pH. This chain is pH-response regulator protein palH/RIM21 (RIM21), found in Yarrowia lipolytica (strain CLIB 122 / E 150) (Yeast).